We begin with the raw amino-acid sequence, 242 residues long: NAD-dependent protein deacetylase (242 aa).

Residues 1 to 242 (MQQFEEVRTI…EFVEGLSSIK (242 aa)) form the Deacetylase sirtuin-type domain. NAD(+) contacts are provided by Ala-23, Thr-27, Phe-34, Arg-35, Gln-102, Ile-104, Asp-105, and His-120. Phe-34 contacts nicotinamide. Ile-104 and Asp-105 together coordinate nicotinamide. The Proton acceptor role is filled by His-120. Zn(2+) contacts are provided by Cys-128, Cys-131, Cys-148, and Cys-151. Thr-187, Ser-188, Asn-213, and Ile-231 together coordinate NAD(+).

The protein belongs to the sirtuin family. Class U subfamily. Requires Zn(2+) as cofactor.

It localises to the cytoplasm. It carries out the reaction N(6)-acetyl-L-lysyl-[protein] + NAD(+) + H2O = 2''-O-acetyl-ADP-D-ribose + nicotinamide + L-lysyl-[protein]. NAD-dependent protein deacetylase which modulates the activities of several enzymes which are inactive in their acetylated form. This chain is NAD-dependent protein deacetylase, found in Bacillus anthracis.